A 227-amino-acid polypeptide reads, in one-letter code: 7-cyano-7-deazaguanine synthase (227 aa).

Position 11–21 (11–21 (VSGGMDSAALL)) interacts with ATP. Zn(2+)-binding residues include cysteine 192, cysteine 200, cysteine 203, and cysteine 206.

The protein belongs to the QueC family. It depends on Zn(2+) as a cofactor.

The enzyme catalyses 7-carboxy-7-deazaguanine + NH4(+) + ATP = 7-cyano-7-deazaguanine + ADP + phosphate + H2O + H(+). It functions in the pathway purine metabolism; 7-cyano-7-deazaguanine biosynthesis. Catalyzes the ATP-dependent conversion of 7-carboxy-7-deazaguanine (CDG) to 7-cyano-7-deazaguanine (preQ(0)). This Persephonella marina (strain DSM 14350 / EX-H1) protein is 7-cyano-7-deazaguanine synthase.